Consider the following 1651-residue polypeptide: Protein Wiz (1651 aa).

The disordered stretch occupies residues 1 to 79 (MEGSLAGSLA…TPDGRGPWEH (79 aa)). Glycyl lysine isopeptide (Lys-Gly) (interchain with G-Cter in SUMO2) cross-links involve residues Ala11, Arg14, Asn29, Gly32, Gly39, Gly42, and Glu258. C2H2-type zinc fingers lie at residues 267 to 289 (FPCI…MSQH), 304 to 326 (LACG…RQLH), and 353 to 375 (LQCP…AKLH). Residue Phe313 forms a Glycyl lysine isopeptide (Lys-Gly) (interchain with G-Cter in SUMO2) linkage. A disordered region spans residues 376–399 (MREPPGQTTKEPFGGSSGAGSPSP). Over residues 386 to 399 (EPFGGSSGAGSPSP) the composition is skewed to low complexity. The segment at 416–439 (SACVFCGFPAPSESLLREHVRLVH) adopts a C2H2-type 4 zinc-finger fold. A disordered region spans residues 546-578 (LGRNKSTVHPQGLGERRRPWSEEEEEEEEEEDV). Acidic residues predominate over residues 567-578 (EEEEEEEEEEDV). C2H2-type zinc fingers lie at residues 701 to 723 (RKCP…VRGH) and 769 to 791 (MRCD…ARAH). A disordered region spans residues 819-843 (AEQPPSPLGREPGGPPGSFLTSRRP). The segment at 870-892 (TTCEVCGACFETRKGLSSHARSH) adopts a C2H2-type 7 zinc-finger fold. Glycyl lysine isopeptide (Lys-Gly) (interchain with G-Cter in SUMO2) cross-links involve residues Lys883, Lys939, Lys955, Lys967, and Lys988. The interval 972–1038 (FSAKGLGHPP…GPLNLTSGPE (67 aa)) is disordered. Low complexity predominate over residues 984–994 (PLLKKTPLALA). Residue Ser996 is modified to Phosphoserine. A Phosphothreonine modification is found at Thr998. Glycyl lysine isopeptide (Lys-Gly) (interchain with G-Cter in SUMO2) cross-links involve residues Lys1000 and Lys1005. Phosphoserine occurs at positions 1006, 1012, 1017, and 1025. An interaction with CTBP1 and CTBP2 1 region spans residues 1030 to 1034 (PLNLT). The segment at 1043-1065 (IRCEFCGEFFENRKGLSSHARSH) adopts a C2H2-type 8 zinc-finger fold. Lys1056 participates in a covalent cross-link: Glycyl lysine isopeptide (Lys-Gly) (interchain with G-Cter in SUMO2). 2 positions are modified to phosphoserine: Ser1079 and Ser1106. The segment at 1091–1174 (RTQSRPGGPP…PGLAAPSLPK (84 aa)) is disordered. Positions 1097–1106 (GGPPNPPGPS) are enriched in pro residues. Glycyl lysine isopeptide (Lys-Gly) (interchain with G-Cter in SUMO2) cross-links involve residues Lys1108 and Lys1112. Phosphoserine occurs at positions 1122, 1127, and 1134. Glycyl lysine isopeptide (Lys-Gly) (interchain with G-Cter in SUMO2) cross-links involve residues Lys1138 and Lys1139. Residues Ser1146 and Ser1151 each carry the phosphoserine modification. Lys1162 carries the post-translational modification N6,N6,N6-trimethyllysine; by EHMT2; alternate. At Lys1162 the chain carries N6,N6-dimethyllysine; by EHMT2; alternate. Residue Lys1177 forms a Glycyl lysine isopeptide (Lys-Gly) (interchain with G-Cter in SUMO2) linkage. Residues 1214-1218 (PLNLS) are interaction with CTBP1 and CTBP2 2. Residues 1227-1249 (IRCEFCGEFFENRKGLSSHARSH) form a C2H2-type 9 zinc finger. A Glycyl lysine isopeptide (Lys-Gly) (interchain with G-Cter in SUMO2) cross-link involves residue Lys1240. Ser1263 is subject to Phosphoserine. Residue Lys1282 forms a Glycyl lysine isopeptide (Lys-Gly) (interchain with G-Cter in SUMO2) linkage. Residues 1283-1331 (KEPPAGDLAPALAEDGPPTVAPGPVQSPLPLSPLAGRPGKPGAGPAQVP) are disordered. Residues 1301 to 1313 (TVAPGPVQSPLPL) show a composition bias toward pro residues. Residues Ser1309 and Ser1314 each carry the phosphoserine modification. A compositionally biased stretch (low complexity) spans 1315 to 1328 (PLAGRPGKPGAGPA). Glycyl lysine isopeptide (Lys-Gly) (interchain with G-Cter in SUMO2) cross-links involve residues Lys1343, Lys1356, Lys1370, Lys1372, and Lys1382. A C2H2-type 10 zinc finger spans residues 1397-1419 (ACCELCGLYFENRKALASHARAH). Glycyl lysine isopeptide (Lys-Gly) (interchain with G-Cter in SUMO2) cross-links involve residues Lys1448, Lys1464, and Lys1477. The interval 1463-1554 (TKKFRSAGHG…ASAARGGEDT (92 aa)) is disordered. Position 1480 is a phosphoserine (Ser1480). Residues 1481–1493 (LGLAPGGLAVVGR) are compositionally biased toward low complexity. Ser1517 carries the post-translational modification Phosphoserine. A Glycyl lysine isopeptide (Lys-Gly) (interchain with G-Cter in SUMO1); alternate cross-link involves residue Lys1523. Lys1523 participates in a covalent cross-link: Glycyl lysine isopeptide (Lys-Gly) (interchain with G-Cter in SUMO2); alternate. Residues 1523–1541 (KAEEHQRQNINKFERRQAR) show a composition bias toward basic and acidic residues. Residues Lys1534 and Lys1560 each participate in a glycyl lysine isopeptide (Lys-Gly) (interchain with G-Cter in SUMO2) cross-link. A C2H2-type 11 zinc finger spans residues 1596-1622 (LKCRFCEVEFQGPLSIQEEWVRHLQRH). The segment at 1629–1651 (SKADPPPEESQAPQAQTAAAEAP) is disordered. Lys1630 participates in a covalent cross-link: Glycyl lysine isopeptide (Lys-Gly) (interchain with G-Cter in SUMO2). The segment covering 1637 to 1651 (ESQAPQAQTAAAEAP) has biased composition (low complexity).

It belongs to the krueppel C2H2-type zinc-finger protein family. Interacts with EHMT1, EHMT2, CTBP1 and CTBP2. Part of a complex containing at least CDYL, REST, WIZ, SETB1, EHMT1 and EHMT2.

The protein localises to the nucleus. Its function is as follows. May link EHMT1 and EHMT2 histone methyltransferases to the CTBP corepressor machinery. May be involved in EHMT1-EHMT2 heterodimer formation and stabilization. The protein is Protein Wiz (WIZ) of Homo sapiens (Human).